The following is a 116-amino-acid chain: Flagellar transcriptional regulator FlhD (116 aa).

The protein belongs to the FlhD family. As to quaternary structure, homodimer; disulfide-linked. Forms a heterohexamer composed of two FlhC and four FlhD subunits. Each FlhC binds a FlhD dimer, forming a heterotrimer, and a hexamer assembles by dimerization of two heterotrimers.

The protein localises to the cytoplasm. Its function is as follows. Functions in complex with FlhC as a master transcriptional regulator that regulates transcription of several flagellar and non-flagellar operons by binding to their promoter region. Activates expression of class 2 flagellar genes, including fliA, which is a flagellum-specific sigma factor that turns on the class 3 genes. Also regulates genes whose products function in a variety of physiological pathways. The protein is Flagellar transcriptional regulator FlhD of Serratia proteamaculans (strain 568).